The following is a 533-amino-acid chain: Probable intron-encoded endonuclease 3 (533 aa).

3 consecutive transmembrane segments (helical) span residues 1-21, 30-50, and 81-101; these read MYLSIIILPLLGSIVAGFFGR, LITCLSVIITTGLAILAFFEV, and LTVAMLIPVLIISSLVHIYSI. The segment at 1 to 108 is ndh-5 exon 1 encoded; sequence MYLSIIILPL…YSISYMSHDP (108 aa). Residues 109 to 533 are ndh-5 intron 1 encoded; it reads RGRVRGKRVY…SISLLLGRRR (425 aa).

In the N-terminal section; belongs to the complex I subunit 5 family. This sequence in the C-terminal section; belongs to the LAGLIDADG endonuclease family.

It is found in the mitochondrion membrane. Mitochondrial DNA endonuclease involved in intron homing. The polypeptide is Probable intron-encoded endonuclease 3 (Neurospora crassa (strain ATCC 24698 / 74-OR23-1A / CBS 708.71 / DSM 1257 / FGSC 987)).